A 119-amino-acid polypeptide reads, in one-letter code: Beta-2-microglobulin (119 aa).

An N-terminal signal peptide occupies residues 1-20; that stretch reads MARSVVVALLVLLSLSGLEA. In terms of domain architecture, Ig-like C1-type spans 25–114; sequence PKIQVYSRHP…VTFPTPKTVK (90 aa). Residues cysteine 45 and cysteine 100 are joined by a disulfide bond.

This sequence belongs to the beta-2-microglobulin family. As to quaternary structure, heterodimer of an alpha chain and a beta chain. Beta-2-microglobulin is the beta-chain of major histocompatibility complex class I molecules.

It is found in the secreted. Its function is as follows. Component of the class I major histocompatibility complex (MHC). Involved in the presentation of peptide antigens to the immune system. The protein is Beta-2-microglobulin (B2M) of Lagothrix lagotricha (Brown woolly monkey).